A 533-amino-acid polypeptide reads, in one-letter code: Laccase-2 (533 aa).

The signal sequence occupies residues 1 to 23 (MFPGARILATLTLALHLLHGAHA). Plastocyanin-like domains lie at 25–171 (IGPA…LSLY), 173–336 (IDNA…LETN), and 382–501 (TAPV…FAED). His-98, His-100, His-143, and His-145 together coordinate Cu cation. 2 cysteine pairs are disulfide-bonded: Cys-119-Cys-516 and Cys-151-Cys-238. Positions 427, 430, and 432 each coordinate Cu cation. An N-linked (GlcNAc...) (high mannose) asparagine glycan is attached at Asn-467. The Cu cation site is built by His-483, Cys-484, His-485, and His-489.

This sequence belongs to the multicopper oxidase family. Cu cation is required as a cofactor. Post-translationally, N-glycosylated at Asn-467; contains a high-mannose glycan with a varying number of mannose residues.

The protein localises to the secreted. It catalyses the reaction 4 hydroquinone + O2 = 4 benzosemiquinone + 2 H2O. Functionally, lignin degradation and detoxification of lignin-derived products. This chain is Laccase-2 (POX2), found in Pleurotus ostreatus (Oyster mushroom).